The primary structure comprises 1723 residues: Lys-gingipain (1723 aa).

Positions 1–24 (MRKLLLLIAASLLGVGLYAQSAKI) are cleaved as a signal peptide. The propeptide occupies 25–228 (KLDAPTTRTT…ETAYKQLFNR (204 aa)). 5 residues coordinate Ca(2+): Asp-313, Asp-337, Asp-339, Phe-341, and Glu-343. The Proton donor role is filled by His-444. Catalysis depends on Cys-477, which acts as the Nucleophile. Residues Phe-482 and Glu-491 each contribute to the Ca(2+) site. The segment at 964 to 985 (WDAPNGTPNPNPNPNPGTTTLS) is disordered. 20 residues coordinate Ca(2+): Ser-987, Glu-989, Asp-1000, Asp-1002, Asp-1004, His-1006, Ser-1021, Gly-1023, Asn-1042, Asp-1145, Glu-1146, Asp-1430, Glu-1432, Asp-1444, Asp-1446, Asp-1448, Asn-1450, Ser-1480, Asn-1495, and Asp-1585.

This sequence belongs to the peptidase C25 family. Post-translationally, proteolytically cleaved into a catalytic subunit and three adhesins. Arg-gingipain is involved in this post-translational processing.

It localises to the secreted. It carries out the reaction Endopeptidase with strict specificity for lysyl bonds.. Activated by the thiol-reducing agents cysteine, 2-mercaptoethanol and dithiothreitol. Inhibited by iodacetamide, iodoacetic acid, leupeptin, tosyl-L-lysine and tosyl-L-phenylalanine. Not inhibited by elastatinal, chymostatin, cystatins, alpha1-antichymotrypsin or the serine protease inhibitors phenylmethylsulfonyl fluoride and diisopropylfluorophosphate. Not inhibited by metal ion chelators. Inhibited by the heavy metal ions Fe(3+), Zn(2+), Cu(2+) and Mn(2+). Its function is as follows. Cysteine proteinase with a strong preference for substrates with Lys in the P1 position. Hydrolyzes bovine hemoglobin, bovine serum albumin, casein, human placental type I collagen and human IgA and IgG. Disrupts the functions of polymorphonuclear leukocytes. May act as a virulence factor in the development of peridontal disease. Involved in the coaggregation of P.gingivalis with other oral bacteria. The sequence is that of Lys-gingipain from Porphyromonas gingivalis (strain ATCC 33277 / DSM 20709 / CIP 103683 / JCM 12257 / NCTC 11834 / 2561).